An 824-amino-acid polypeptide reads, in one-letter code: Probable ion channel POLLUX (824 aa).

Residues 45-54 (DGDDSSNLPT) are compositionally biased toward low complexity. A disordered region spans residues 45-70 (DGDDSSNLPTVPNPEEKPVPVPSQSP). The next 4 helical transmembrane spans lie at 81–101 (FSLTHCLKFICSCSFTYVMFL), 135–155 (AVVFFSVIITFVLPFLLYMYL), 198–218 (LALLLATVVLIVYGGLALYAV), and 250–270 (IVSVAISAGGMLIFATMLGLI). RCK N-terminal domains lie at 291 to 432 (SNHI…ETVV) and 550 to 699 (PEKI…DKSI). Positions 325-346 (LAERDKEEMETDIAKFEFDLMG) form a coiled coil.

It belongs to the castor/pollux (TC 1.A.1.23) family.

The protein resides in the nucleus membrane. This is Probable ion channel POLLUX from Arabidopsis thaliana (Mouse-ear cress).